The sequence spans 107 residues: uncharacterized protein (107 aa).

The interval 86–107 (KRAETARLPAATPQKRTGPARG) is disordered.

This is an uncharacterized protein from Saccharomyces cerevisiae (strain ATCC 204508 / S288c) (Baker's yeast).